A 433-amino-acid chain; its full sequence is Histidine--tRNA ligase (433 aa).

This sequence belongs to the class-II aminoacyl-tRNA synthetase family. As to quaternary structure, homodimer.

The protein resides in the cytoplasm. It carries out the reaction tRNA(His) + L-histidine + ATP = L-histidyl-tRNA(His) + AMP + diphosphate + H(+). This chain is Histidine--tRNA ligase, found in Blochmanniella floridana.